Here is a 956-residue protein sequence, read N- to C-terminus: UvrABC system protein A (956 aa).

ATP is bound at residue 33–40; it reads GLSGSGKS. A C4-type zinc finger spans residues 252 to 279; the sequence is CPYCGFSVGELEPRMFSFNSPFGACPTC. ABC transporter domains lie at 309–587 and 607–936; these read WRPI…KNSI and GNGL…KYLK. Residue 639–646 coordinates ATP; the sequence is GVSGSGKS. A C4-type zinc finger spans residues 738–764; sequence CEACKGDGIIKIEMHFLPDVYVPCEVC.

This sequence belongs to the ABC transporter superfamily. UvrA family. Forms a heterotetramer with UvrB during the search for lesions.

It is found in the cytoplasm. Functionally, the UvrABC repair system catalyzes the recognition and processing of DNA lesions. UvrA is an ATPase and a DNA-binding protein. A damage recognition complex composed of 2 UvrA and 2 UvrB subunits scans DNA for abnormalities. When the presence of a lesion has been verified by UvrB, the UvrA molecules dissociate. This is UvrABC system protein A from Listeria monocytogenes serotype 4b (strain F2365).